Reading from the N-terminus, the 167-residue chain is UPF0114 protein in repA1-repA2 intergenic region (167 aa).

A run of 3 helical transmembrane segments spans residues 15 to 35, 53 to 73, and 136 to 156; these read LMFP…LKFF, LVLV…LVMV, and IMLC…MAYI.

The protein belongs to the UPF0114 family.

It is found in the cell membrane. The polypeptide is UPF0114 protein in repA1-repA2 intergenic region (Buchnera aphidicola subsp. Diuraphis noxia).